A 143-amino-acid polypeptide reads, in one-letter code: Myosin 1 light chain cam2 (143 aa).

3 consecutive EF-hand domains span residues 6–41 (EQTD…LGIN), 75–110 (ESEE…LGEK), and 111–143 (LSDN…IMAK).

Belongs to the calmodulin family. Interacts with myo1 and pik1.

It is found in the cytoplasm. Its subcellular location is the prospore membrane. In terms of biological role, plays a role in meiosis and sporulation. The polypeptide is Myosin 1 light chain cam2 (Schizosaccharomyces pombe (strain 972 / ATCC 24843) (Fission yeast)).